Reading from the N-terminus, the 734-residue chain is Threonine--tRNA ligase, cytoplasmic (734 aa).

Residues 1 to 41 form a disordered region; sequence MSASEAGVTEQVKKLSVKDSSNDAVKPNKKENKKSKQQSLY. The span at 11–30 shows a compositional bias: basic and acidic residues; the sequence is QVKKLSVKDSSNDAVKPNKK. A TGS domain is found at 69–135; sequence SMPRVPLKIV…EGEANEEIKL (67 aa). Serine 195 and serine 289 each carry phosphoserine. 2 positions are modified to phosphothreonine: threonine 297 and threonine 381. Phosphoserine occurs at positions 453 and 457. Threonine 460 is modified (phosphothreonine). Serine 605 is subject to Phosphoserine.

The protein belongs to the class-II aminoacyl-tRNA synthetase family.

Its subcellular location is the cytoplasm. It carries out the reaction tRNA(Thr) + L-threonine + ATP = L-threonyl-tRNA(Thr) + AMP + diphosphate + H(+). In Saccharomyces cerevisiae (strain ATCC 204508 / S288c) (Baker's yeast), this protein is Threonine--tRNA ligase, cytoplasmic (THS1).